The chain runs to 224 residues: Ribose-5-phosphate isomerase A (224 aa).

Substrate-binding positions include 26–29 (TGST), 81–84 (DGAD), and 94–97 (KGGG). Glutamate 103 acts as the Proton acceptor in catalysis. Lysine 121 is a binding site for substrate.

It belongs to the ribose 5-phosphate isomerase family. As to quaternary structure, homodimer.

The enzyme catalyses aldehydo-D-ribose 5-phosphate = D-ribulose 5-phosphate. It functions in the pathway carbohydrate degradation; pentose phosphate pathway; D-ribose 5-phosphate from D-ribulose 5-phosphate (non-oxidative stage): step 1/1. Catalyzes the reversible conversion of ribose-5-phosphate to ribulose 5-phosphate. This Listeria monocytogenes serotype 4b (strain CLIP80459) protein is Ribose-5-phosphate isomerase A.